Here is a 482-residue protein sequence, read N- to C-terminus: Retinoic acid receptor beta (482 aa).

The segment at 1 to 114 (MSTSSHACPV…PLPPPRVYKP (114 aa)) is modulating. Ser-104 is subject to Phosphoserine. 2 consecutive NR C4-type zinc fingers follow at residues 115–135 (CFVC…CEGC) and 151–175 (CHRD…LQKC). The segment at residues 115-180 (CFVCQDKSSG…RLQKCFEVGM (66 aa)) is a DNA-binding region (nuclear receptor). The hinge stretch occupies residues 181 to 209 (SKESVRNDRNKKKKEPSKQECTESYEMTA). Residues 210–444 (ELDDLTEKIR…PLIQEMLENS (235 aa)) enclose the NR LBD domain. A disordered region spans residues 443 to 482 (NSEGHEPLTPSSSGNIAEHSPSVSPSSVENSGVSQSPLLQ). Residues 462–482 (SPSVSPSSVENSGVSQSPLLQ) show a composition bias toward low complexity.

It belongs to the nuclear hormone receptor family. NR1 subfamily. As to quaternary structure, homodimer. Heterodimer; with a RXR molecule. Binds DNA preferentially as a RAR/RXR heterodimer. Heterodimerizes (via NR LBD) with RXRA. Interacts weakly with NCOR2.

It is found in the nucleus. It localises to the cytoplasm. Functionally, receptor for retinoic acid. Retinoic acid receptors bind as heterodimers to their target response elements in response to their ligands, all-trans or 9-cis retinoic acid, and regulate gene expression in various biological processes. The RAR/RXR heterodimers bind to the retinoic acid response elements (RARE) composed of tandem 5'-AGGTCA-3' sites known as DR1-DR5. In the absence of ligand, acts mainly as an activator of gene expression due to weak binding to corepressors. The RXRA/RARB heterodimer can act as a repressor on the DR1 element and as an activator on the DR5 element. In concert with RARG, required for skeletal growth, matrix homeostasis and growth plate function. This is Retinoic acid receptor beta (Rarb) from Mus musculus (Mouse).